A 56-amino-acid chain; its full sequence is Large ribosomal subunit protein bL32 (56 aa).

Belongs to the bacterial ribosomal protein bL32 family.

In Bacillus cereus (strain ATCC 14579 / DSM 31 / CCUG 7414 / JCM 2152 / NBRC 15305 / NCIMB 9373 / NCTC 2599 / NRRL B-3711), this protein is Large ribosomal subunit protein bL32.